Here is a 439-residue protein sequence, read N- to C-terminus: MPWAALLAGMHATVSPSRVRGRARAPPSKSYTHRALLAAGYADGETVVRDPLVSADTRATARAVELLGGAAARENGDWVVTGFGSRPAIPDAVIDCANSGTTMRLVTAAAALADGTTVLTGDESLRARPHGPLLDALSGLGGTARSTRGNGQAPLVVDGPVSGGSVALPGDVSSQFVTALLMAGAVTETGIETDLTTELKSAPYVDITLDVLDAFGVGASETAAGYRVRGGQAYAPSGAEYAVPGDFSSASYLLAAGALAAADGAAVVVEGMHPSAQGDAAIVDVLERMGADIDWDTESGVITVQRSELSGVEVGVADTPDLLPTIAVLGAAADGTTRITDAEHVRYKETDRVAAMAESLSKLGASVEERPDELVVRGGDTELSGASVDGRGDHRLVMALAVAGLVADGETTIAGSEHVDVSFPDFFEVLAGLGADTDG.

Positions 29, 30, and 34 each coordinate 3-phosphoshikimate. Position 29 (lysine 29) interacts with phosphoenolpyruvate. Phosphoenolpyruvate-binding residues include glycine 100 and arginine 128. Residues serine 173, serine 174, glutamine 175, serine 201, aspartate 321, and lysine 348 each coordinate 3-phosphoshikimate. Glutamine 175 serves as a coordination point for phosphoenolpyruvate. The Proton acceptor role is filled by aspartate 321. Positions 352 and 395 each coordinate phosphoenolpyruvate.

It belongs to the EPSP synthase family. As to quaternary structure, monomer.

Its subcellular location is the cytoplasm. The catalysed reaction is 3-phosphoshikimate + phosphoenolpyruvate = 5-O-(1-carboxyvinyl)-3-phosphoshikimate + phosphate. It functions in the pathway metabolic intermediate biosynthesis; chorismate biosynthesis. Functionally, catalyzes the transfer of the enolpyruvyl moiety of phosphoenolpyruvate (PEP) to the 5-hydroxyl of shikimate-3-phosphate (S3P) to produce enolpyruvyl shikimate-3-phosphate and inorganic phosphate. The polypeptide is 3-phosphoshikimate 1-carboxyvinyltransferase (Halobacterium salinarum (strain ATCC 700922 / JCM 11081 / NRC-1) (Halobacterium halobium)).